The sequence spans 547 residues: Glucose-6-phosphate isomerase (547 aa).

The active-site Proton donor is glutamate 356. Catalysis depends on residues histidine 387 and lysine 508.

This sequence belongs to the GPI family.

Its subcellular location is the cytoplasm. The catalysed reaction is alpha-D-glucose 6-phosphate = beta-D-fructose 6-phosphate. The protein operates within carbohydrate biosynthesis; gluconeogenesis. It functions in the pathway carbohydrate degradation; glycolysis; D-glyceraldehyde 3-phosphate and glycerone phosphate from D-glucose: step 2/4. Functionally, catalyzes the reversible isomerization of glucose-6-phosphate to fructose-6-phosphate. This chain is Glucose-6-phosphate isomerase, found in Cupriavidus taiwanensis (strain DSM 17343 / BCRC 17206 / CCUG 44338 / CIP 107171 / LMG 19424 / R1) (Ralstonia taiwanensis (strain LMG 19424)).